Reading from the N-terminus, the 720-residue chain is Proline-rich receptor-like protein kinase PERK12 (720 aa).

Positions 1 to 240 are disordered; sequence MSDLGESPSS…GNGDGGGGGG (240 aa). Residues 1–246 are Extracellular-facing; sequence MSDLGESPSS…GGGGGYQGKT (246 aa). Pro residues predominate over residues 10-25; sequence SSPPAPPADTAPPPET. Residues 26–35 are compositionally biased toward low complexity; sequence PSENSALPPV. Pro residues-rich tracts occupy residues 52-84 and 92-116; these read LSEP…PSDS and PSPP…PAPP. Asparagine 117 carries N-linked (GlcNAc...) asparagine glycosylation. Pro residues-rich tracts occupy residues 123–138 and 147–207; these read NPPP…PSSP and PESP…PPKT. Residues 247–267 traverse the membrane as a helical segment; that stretch reads MVGMAVAGFAIMALIGVVFLV. Topologically, residues 268–720 are cytoplasmic; sequence RRKKKRNIDS…ETRPFNNRRF (453 aa). The disordered stretch occupies residues 300-349; the sequence is QDPGKGYSSGPNGSMYNNSQQQQSSMGNSYGTAGGGYPHHQMQSSGTPDS. Residues 311–330 are compositionally biased toward low complexity; sequence NGSMYNNSQQQQSSMGNSYG. The Protein kinase domain occupies 371–624; the sequence is FARKNILGEG…EVFRMIETAA (254 aa). Residues 377-385 and lysine 399 contribute to the ATP site; that span reads LGEGGFGCV. Position 444 is a phosphotyrosine (tyrosine 444). Aspartate 495 serves as the catalytic Proton acceptor. Serine 528 is subject to Phosphoserine. Phosphothreonine occurs at positions 529 and 534. Phosphotyrosine is present on tyrosine 542. The disordered stretch occupies residues 698–720; the sequence is SAKSSSDFSGNESETRPFNNRRF.

It belongs to the protein kinase superfamily. Ser/Thr protein kinase family. Mostly expressed in apical parts, including flower buds, and particularly in anthers. Also present in root hairs.

The protein localises to the cell membrane. It carries out the reaction L-seryl-[protein] + ATP = O-phospho-L-seryl-[protein] + ADP + H(+). The catalysed reaction is L-threonyl-[protein] + ATP = O-phospho-L-threonyl-[protein] + ADP + H(+). In terms of biological role, regulates the auxin-related MAX (More Axillary Growth) pathway during the shoot branching. In Arabidopsis thaliana (Mouse-ear cress), this protein is Proline-rich receptor-like protein kinase PERK12 (PERK12).